Reading from the N-terminus, the 239-residue chain is Leucine-rich repeat-containing protein 57 (239 aa).

A lipid anchor (N-myristoyl glycine) is attached at G2. LRR repeat units follow at residues N39–K60, L63–K85, K86–L107, A109–L130, H132–L153, Q154–C175, R177–I197, and Q202–E222.

The protein localises to the membrane. This is Leucine-rich repeat-containing protein 57 (Lrrc57) from Mus musculus (Mouse).